Reading from the N-terminus, the 52-residue chain is DNA-directed RNA polymerase subunit Rpo12 (52 aa).

C13, C30, and C33 together coordinate Zn(2+).

This sequence belongs to the archaeal Rpo12/eukaryotic RPC10 RNA polymerase subunit family. As to quaternary structure, part of the RNA polymerase complex. Zn(2+) is required as a cofactor.

The protein localises to the cytoplasm. It carries out the reaction RNA(n) + a ribonucleoside 5'-triphosphate = RNA(n+1) + diphosphate. DNA-dependent RNA polymerase (RNAP) catalyzes the transcription of DNA into RNA using the four ribonucleoside triphosphates as substrates. This Pyrobaculum arsenaticum (strain DSM 13514 / JCM 11321 / PZ6) protein is DNA-directed RNA polymerase subunit Rpo12.